A 98-amino-acid polypeptide reads, in one-letter code: NADH-ubiquinone oxidoreductase chain 4L (98 aa).

3 helical membrane passes run 1–21, 29–49, and 61–81; these read MPFIYINTALAYSMSLLGLLI, SLLCLEGMMLSLFIMMTTMTL, and IILLVFAACEAAVGLALLILI.

The protein belongs to the complex I subunit 4L family. In terms of assembly, core subunit of respiratory chain NADH dehydrogenase (Complex I) which is composed of 45 different subunits.

It localises to the mitochondrion inner membrane. It catalyses the reaction a ubiquinone + NADH + 5 H(+)(in) = a ubiquinol + NAD(+) + 4 H(+)(out). Its function is as follows. Core subunit of the mitochondrial membrane respiratory chain NADH dehydrogenase (Complex I) which catalyzes electron transfer from NADH through the respiratory chain, using ubiquinone as an electron acceptor. Part of the enzyme membrane arm which is embedded in the lipid bilayer and involved in proton translocation. The chain is NADH-ubiquinone oxidoreductase chain 4L (MT-ND4L) from Cebus albifrons (White-fronted capuchin).